Reading from the N-terminus, the 414-residue chain is L-cysteine:1D-myo-inositol 2-amino-2-deoxy-alpha-D-glucopyranoside ligase (414 aa).

Cys43 contacts Zn(2+). L-cysteinyl-5'-AMP-binding positions include 43–46 (CGIT), Thr58, and 81–83 (NVT). The 'HIGH' region motif lies at 45 to 55 (ITPYDATHLGH). A 'ERGGDP' region motif is present at residues 187 to 192 (ERGGDP). Trp227 provides a ligand contact to L-cysteinyl-5'-AMP. Zn(2+) is bound at residue Cys231. Residue 249-251 (GSD) participates in L-cysteinyl-5'-AMP binding. Zn(2+) is bound at residue His256. Residue Ile283 coordinates L-cysteinyl-5'-AMP. The 'KMSKS' region motif lies at 289-293 (KMSKS).

The protein belongs to the class-I aminoacyl-tRNA synthetase family. MshC subfamily. As to quaternary structure, monomer. Zn(2+) is required as a cofactor.

The catalysed reaction is 1D-myo-inositol 2-amino-2-deoxy-alpha-D-glucopyranoside + L-cysteine + ATP = 1D-myo-inositol 2-(L-cysteinylamino)-2-deoxy-alpha-D-glucopyranoside + AMP + diphosphate + H(+). In terms of biological role, catalyzes the ATP-dependent condensation of GlcN-Ins and L-cysteine to form L-Cys-GlcN-Ins. The polypeptide is L-cysteine:1D-myo-inositol 2-amino-2-deoxy-alpha-D-glucopyranoside ligase (Tsukamurella paurometabola (strain ATCC 8368 / DSM 20162 / CCUG 35730 / CIP 100753 / JCM 10117 / KCTC 9821 / NBRC 16120 / NCIMB 702349 / NCTC 13040) (Corynebacterium paurometabolum)).